A 354-amino-acid chain; its full sequence is NADH-quinone oxidoreductase subunit H (354 aa).

The next 8 membrane-spanning stretches (helical) occupy residues 25 to 45 (LVRILVVAVVILLCVAYLILW), 91 to 111 (WVYLVAPVMVVVPAFAVWAVI), 126 to 146 (LLYAISISSVGVYGVILAGWA), 170 to 190 (MGFALVVVMMTAGTMNLSDIV), 205 to 225 (FLSWNWLPLLPAFVVYFVSGI), 257 to 277 (LFFLAEYINMIVISALASILF), 290 to 310 (FIPGIVWLVLKVFLLLSVFIW), and 330 to 350 (VFLPVTVIWVVVVGFWIMSPL).

Belongs to the complex I subunit 1 family. NDH-1 is composed of 14 different subunits. Subunits NuoA, H, J, K, L, M, N constitute the membrane sector of the complex.

Its subcellular location is the cell inner membrane. The catalysed reaction is a quinone + NADH + 5 H(+)(in) = a quinol + NAD(+) + 4 H(+)(out). Its function is as follows. NDH-1 shuttles electrons from NADH, via FMN and iron-sulfur (Fe-S) centers, to quinones in the respiratory chain. The immediate electron acceptor for the enzyme in this species is believed to be ubiquinone. Couples the redox reaction to proton translocation (for every two electrons transferred, four hydrogen ions are translocated across the cytoplasmic membrane), and thus conserves the redox energy in a proton gradient. This subunit may bind ubiquinone. The protein is NADH-quinone oxidoreductase subunit H of Paraburkholderia phymatum (strain DSM 17167 / CIP 108236 / LMG 21445 / STM815) (Burkholderia phymatum).